Here is an 89-residue protein sequence, read N- to C-terminus: Small ribosomal subunit protein uS15 (89 aa).

Belongs to the universal ribosomal protein uS15 family. Part of the 30S ribosomal subunit. Forms a bridge to the 50S subunit in the 70S ribosome, contacting the 23S rRNA.

Functionally, one of the primary rRNA binding proteins, it binds directly to 16S rRNA where it helps nucleate assembly of the platform of the 30S subunit by binding and bridging several RNA helices of the 16S rRNA. In terms of biological role, forms an intersubunit bridge (bridge B4) with the 23S rRNA of the 50S subunit in the ribosome. This chain is Small ribosomal subunit protein uS15, found in Chlorobium limicola (strain DSM 245 / NBRC 103803 / 6330).